The primary structure comprises 96 residues: Putative septation protein SpoVG (96 aa).

This sequence belongs to the SpoVG family.

In terms of biological role, could be involved in septation. This is Putative septation protein SpoVG from Clostridium kluyveri (strain ATCC 8527 / DSM 555 / NBRC 12016 / NCIMB 10680 / K1).